Here is a 180-residue protein sequence, read N- to C-terminus: ATP-dependent protease subunit HslV (180 aa).

The active site involves Thr2. Na(+) contacts are provided by Gly157, Cys160, and Thr163.

The protein belongs to the peptidase T1B family. HslV subfamily. As to quaternary structure, a double ring-shaped homohexamer of HslV is capped on each side by a ring-shaped HslU homohexamer. The assembly of the HslU/HslV complex is dependent on binding of ATP.

It localises to the cytoplasm. It carries out the reaction ATP-dependent cleavage of peptide bonds with broad specificity.. Allosterically activated by HslU binding. In terms of biological role, protease subunit of a proteasome-like degradation complex believed to be a general protein degrading machinery. This is ATP-dependent protease subunit HslV from Tolumonas auensis (strain DSM 9187 / NBRC 110442 / TA 4).